Here is a 290-residue protein sequence, read N- to C-terminus: MKLLDGKKCAESLVADIARKVAGYEESGLRKPHMTVILVGEHAPSESYVKSKIKSCGNAGFEGTLLRFPDTITEAELLEKIRGINADPTTDGLIVQLPLPRHINQQHIINAIAPEKDIDGFHPTNFGRMTLGQKAFRPATAYGICKLLQFYEIPVWGKHCVVIGRSNIVGKPISIMLSNDFDIGNATVTLTHIETPRELLLDETRRADIVIVAVGIPGFVTEDMVKEGVVVIDVGINRLEDGKIVGDVDFENVKKKCSWITPVPGGVGRMTVAALMINTLMAYQNNFDLV.

Residues 164-166 (GRS), I193, and I236 each bind NADP(+).

This sequence belongs to the tetrahydrofolate dehydrogenase/cyclohydrolase family. Homodimer.

The enzyme catalyses (6R)-5,10-methylene-5,6,7,8-tetrahydrofolate + NADP(+) = (6R)-5,10-methenyltetrahydrofolate + NADPH. It catalyses the reaction (6R)-5,10-methenyltetrahydrofolate + H2O = (6R)-10-formyltetrahydrofolate + H(+). The protein operates within one-carbon metabolism; tetrahydrofolate interconversion. In terms of biological role, catalyzes the oxidation of 5,10-methylenetetrahydrofolate to 5,10-methenyltetrahydrofolate and then the hydrolysis of 5,10-methenyltetrahydrofolate to 10-formyltetrahydrofolate. The protein is Bifunctional protein FolD 1 of Geobacter metallireducens (strain ATCC 53774 / DSM 7210 / GS-15).